The primary structure comprises 414 residues: Hydroxysqualene dehydroxylase (414 aa).

The protein belongs to the HpnE family.

The catalysed reaction is squalene + FAD + H2O + H(+) = hydroxysqualene + FADH2. The protein operates within secondary metabolite biosynthesis; hopanoid biosynthesis. In terms of biological role, involved in the biosynthesis of the hopanoid precursor squalene (SQ) from farnesyl diphosphate (FPP). Catalyzes the third (last) step, the reduction of hydroxysqualene (HSQ) to SQ. In Zymomonas mobilis subsp. mobilis (strain ATCC 31821 / ZM4 / CP4), this protein is Hydroxysqualene dehydroxylase.